Here is a 391-residue protein sequence, read N- to C-terminus: Probable FAD-dependent oxidoreductase PA4991 (391 aa).

Residues Ala-17, Glu-36, 44-45 (QS), 49-51 (QGI), and 346-347 (LA) each bind FAD.

It belongs to the DAO family. As to quaternary structure, monomer. Requires FAD as cofactor.

In terms of biological role, probably functions as a FAD-dependent oxidoreductase, whose physiological substrate is unknown. Does not display amino-acid oxidase or glycerol-3-phosphate dehydrogenase activities. Is essential for growth of P.aeruginosa in the sputum of cystic fibrosis patients. The polypeptide is Probable FAD-dependent oxidoreductase PA4991 (Pseudomonas aeruginosa (strain ATCC 15692 / DSM 22644 / CIP 104116 / JCM 14847 / LMG 12228 / 1C / PRS 101 / PAO1)).